Consider the following 1032-residue polypeptide: Serine/threonine-protein kinase ppk31 (1032 aa).

The PAS domain maps to 3–72 (NPEQLKRILS…KATDNLFRKS (70 aa)). In terms of domain architecture, Protein kinase spans 528 to 877 (FILLKEINRG…YQEIKKHPFF (350 aa)). ATP is bound by residues 534 to 542 (INRGAYGRV) and K557. The active-site Proton acceptor is D652. A disordered region spans residues 938 to 963 (PKATPADSGTETSNSAAFSASEEETT). Residues 947–957 (TETSNSAAFSA) show a composition bias toward low complexity.

Belongs to the protein kinase superfamily. Ser/Thr protein kinase family.

The protein localises to the cytoplasm. The enzyme catalyses L-seryl-[protein] + ATP = O-phospho-L-seryl-[protein] + ADP + H(+). The catalysed reaction is L-threonyl-[protein] + ATP = O-phospho-L-threonyl-[protein] + ADP + H(+). In terms of biological role, has a role in meiosis. The chain is Serine/threonine-protein kinase ppk31 (ppk31) from Schizosaccharomyces pombe (strain 972 / ATCC 24843) (Fission yeast).